Reading from the N-terminus, the 135-residue chain is ATP synthase epsilon chain (135 aa).

The protein belongs to the ATPase epsilon chain family. F-type ATPases have 2 components, CF(1) - the catalytic core - and CF(0) - the membrane proton channel. CF(1) has five subunits: alpha(3), beta(3), gamma(1), delta(1), epsilon(1). CF(0) has three main subunits: a, b and c.

It is found in the cell inner membrane. In terms of biological role, produces ATP from ADP in the presence of a proton gradient across the membrane. The polypeptide is ATP synthase epsilon chain (Rhodopseudomonas palustris (strain ATCC BAA-98 / CGA009)).